The following is a 106-amino-acid chain: Nucleoid-associated protein RPD_0086 (106 aa).

Belongs to the YbaB/EbfC family. In terms of assembly, homodimer.

Its subcellular location is the cytoplasm. It is found in the nucleoid. Functionally, binds to DNA and alters its conformation. May be involved in regulation of gene expression, nucleoid organization and DNA protection. The protein is Nucleoid-associated protein RPD_0086 of Rhodopseudomonas palustris (strain BisB5).